We begin with the raw amino-acid sequence, 440 residues long: Probable D-serine dehydratase (440 aa).

Lys-111 is subject to N6-(pyridoxal phosphate)lysine.

It belongs to the serine/threonine dehydratase family. DsdA subfamily. Pyridoxal 5'-phosphate serves as cofactor.

It catalyses the reaction D-serine = pyruvate + NH4(+). This is Probable D-serine dehydratase from Rhizobium leguminosarum bv. trifolii (strain WSM2304).